A 229-amino-acid chain; its full sequence is Ribonuclease 3 (229 aa).

Residues 5–127 enclose the RNase III domain; that stretch reads LSRLERQLGY…LIGAIYLDAG (123 aa). Glutamate 40 is a binding site for Mg(2+). Residue aspartate 44 is part of the active site. Mg(2+) is bound by residues aspartate 113 and glutamate 116. Residue glutamate 116 is part of the active site. A DRBM domain is found at 154–224; that stretch reads DPKTRLQEFL…AAAALIALGV (71 aa).

It belongs to the ribonuclease III family. Homodimer. Requires Mg(2+) as cofactor.

Its subcellular location is the cytoplasm. The enzyme catalyses Endonucleolytic cleavage to 5'-phosphomonoester.. In terms of biological role, digests double-stranded RNA. Involved in the processing of primary rRNA transcript to yield the immediate precursors to the large and small rRNAs (23S and 16S). Processes some mRNAs, and tRNAs when they are encoded in the rRNA operon. Processes pre-crRNA and tracrRNA of type II CRISPR loci if present in the organism. This Pseudomonas syringae pv. tomato (strain ATCC BAA-871 / DC3000) protein is Ribonuclease 3.